Reading from the N-terminus, the 370-residue chain is Chaperone protein DnaJ (370 aa).

Residues 6–70 enclose the J domain; sequence DYYEVLGVQR…EKRSMYDRFG (65 aa). A CR-type zinc finger spans residues 128–208; it reads GVEKTIEYRR…CRGEGRIRQT (81 aa). The Zn(2+) site is built by Cys-141, Cys-144, Cys-158, Cys-161, Cys-182, Cys-185, Cys-196, and Cys-199. 4 CXXCXGXG motif repeats span residues 141–148, 158–165, 182–189, and 196–203; these read CPACRGSG, CPKCGGLG, CDMCRGEG, and CRECRGEG.

It belongs to the DnaJ family. Homodimer. Zn(2+) serves as cofactor.

The protein localises to the cytoplasm. In terms of biological role, participates actively in the response to hyperosmotic and heat shock by preventing the aggregation of stress-denatured proteins and by disaggregating proteins, also in an autonomous, DnaK-independent fashion. Unfolded proteins bind initially to DnaJ; upon interaction with the DnaJ-bound protein, DnaK hydrolyzes its bound ATP, resulting in the formation of a stable complex. GrpE releases ADP from DnaK; ATP binding to DnaK triggers the release of the substrate protein, thus completing the reaction cycle. Several rounds of ATP-dependent interactions between DnaJ, DnaK and GrpE are required for fully efficient folding. Also involved, together with DnaK and GrpE, in the DNA replication of plasmids through activation of initiation proteins. The polypeptide is Chaperone protein DnaJ (Roseiflexus castenholzii (strain DSM 13941 / HLO8)).